Reading from the N-terminus, the 54-residue chain is MLHYAVVFLVIALIAALFGFGGIAAGAVGIAKILFFVFVIMAVVTFVLSLLKRG.

A run of 2 helical transmembrane segments spans residues 5–25 (AVVF…GIAA) and 28–48 (VGIA…TFVL).

This sequence belongs to the UPF0391 family.

The protein localises to the cell membrane. This is UPF0391 membrane protein Aave_3864 from Paracidovorax citrulli (strain AAC00-1) (Acidovorax citrulli).